The sequence spans 129 residues: Protein Turandot B2 (129 aa).

The N-terminal stretch at 1-21 (MNSATSLMCFALLLISPLCMG) is a signal peptide.

The protein belongs to the Turandot family.

It is found in the secreted. A humoral factor that may play a role in stress tolerance. The sequence is that of Protein Turandot B2 (TotB2) from Drosophila erecta (Fruit fly).